We begin with the raw amino-acid sequence, 245 residues long: 5-oxoprolinase subunit A (245 aa).

The protein belongs to the LamB/PxpA family. In terms of assembly, forms a complex composed of PxpA, PxpB and PxpC.

It catalyses the reaction 5-oxo-L-proline + ATP + 2 H2O = L-glutamate + ADP + phosphate + H(+). In terms of biological role, catalyzes the cleavage of 5-oxoproline to form L-glutamate coupled to the hydrolysis of ATP to ADP and inorganic phosphate. In Erwinia tasmaniensis (strain DSM 17950 / CFBP 7177 / CIP 109463 / NCPPB 4357 / Et1/99), this protein is 5-oxoprolinase subunit A.